A 236-amino-acid polypeptide reads, in one-letter code: ATP synthase subunit a (236 aa).

A run of 5 helical transmembrane segments spans residues 18 to 38 (SNLL…VLCT), 80 to 100 (VTLL…AIVI), 112 to 132 (DPAI…YYGI), 179 to 199 (ILLS…IGAA), and 200 to 220 (IPML…AFIF).

This sequence belongs to the ATPase A chain family. As to quaternary structure, F-type ATPases have 2 components, CF(1) - the catalytic core - and CF(0) - the membrane proton channel. CF(1) has five subunits: alpha(3), beta(3), gamma(1), delta(1), epsilon(1). CF(0) has three main subunits: a(1), b(2) and c(9-12). The alpha and beta chains form an alternating ring which encloses part of the gamma chain. CF(1) is attached to CF(0) by a central stalk formed by the gamma and epsilon chains, while a peripheral stalk is formed by the delta and b chains.

It localises to the cell membrane. Key component of the proton channel; it plays a direct role in the translocation of protons across the membrane. This chain is ATP synthase subunit a, found in Priestia megaterium (strain ATCC 12872 / QMB1551) (Bacillus megaterium).